The following is a 462-amino-acid chain: Centrosomal protein of 55 kDa (462 aa).

Residues Met1–Lys11 show a composition bias toward basic and acidic residues. The segment at Met1–Ala26 is disordered. Residues Ser12 to Ser23 are compositionally biased toward low complexity. Positions Lys50–His400 form a coiled coil. 2 positions are modified to phosphoserine: Ser96 and Ser99. An interaction with TSG101 region spans residues Ala157 to Lys235. The interval Phe160–Ala214 is interaction with PDCD6IP. A required for localization to the interphase centrosome and to the midbody during cytokinesis region spans residues Gln354–Lys462. The tract at residues Pro410 to Ala430 is disordered. Phosphoserine is present on residues Ser423, Ser426, and Ser428. Ser434 is modified (phosphoserine; by PLK1).

In terms of assembly, homodimer. Interacts (phosphorylated on Ser-423 and Ser-426) with PLK1; the interaction is indirect via the MTMR3:MTMR4 heterooligomer, occurs during early mitosis, regulates the phosphorylation of CEP55 by PLK1 and its recruitment to the midbody where it can mediate cell abscission. Interacts with AKAP9/CG-NAP; the interaction occurs in interphase and is lost upon mitotic entry. Interacts with PCNT/Kendrin; the interaction occurs in interphase and is lost upon mitotic entry. Directly interacts with PDCD6IP; this interaction is required for PDCD6IP targeting to the midbody; CEP55 binds PDCD6IP in a 2:1 stoichiometry; PDCD6IP competes with TSG101 for the same binding site. Interacts with TSG101; TSG101 competes with PDCD6IP for the same binding site; interaction is required for cytokinesis. Interacts with MVB12A, VPS37B, VPS37C and VPS28. In terms of processing, there is a hierachy of phosphorylation, where both Ser-423 and Ser-426 are phosphorylated at the onset of mitosis, prior to Ser-434. Phosphorylation at Ser-423 and Ser-426 is required for dissociation from the centrosome at the G2/M boundary. Phosphorylation at the 3 sites, Ser-423, Ser-426 and Ser-434, is required for protein function at the final stages of cell division to complete cytokinesis successfully.

It localises to the cytoplasm. Its subcellular location is the cytoskeleton. The protein resides in the microtubule organizing center. It is found in the centrosome. The protein localises to the centriole. It localises to the cleavage furrow. Its subcellular location is the midbody. The protein resides in the midbody ring. Plays a role in mitotic exit and cytokinesis. Recruits PDCD6IP and TSG101 to midbody during cytokinesis. Required for successful completion of cytokinesis. Not required for microtubule nucleation. Plays a role in the development of the brain and kidney. The chain is Centrosomal protein of 55 kDa from Mus musculus (Mouse).